A 217-amino-acid polypeptide reads, in one-letter code: Small ribosomal subunit protein uS3 (217 aa).

In terms of domain architecture, KH type-2 spans 38–106; that stretch reads IRKFIDNELK…KVHINVIEIK (69 aa).

This sequence belongs to the universal ribosomal protein uS3 family. As to quaternary structure, part of the 30S ribosomal subunit. Forms a tight complex with proteins S10 and S14.

Its function is as follows. Binds the lower part of the 30S subunit head. Binds mRNA in the 70S ribosome, positioning it for translation. The chain is Small ribosomal subunit protein uS3 (rpsC) from Staphylococcus aureus (strain COL).